The primary structure comprises 363 residues: Flagellar P-ring protein (363 aa).

The signal sequence occupies residues 1–20 (MKKFTLLLLCFVLPMTSAYA).

It belongs to the FlgI family. In terms of assembly, the basal body constitutes a major portion of the flagellar organelle and consists of four rings (L,P,S, and M) mounted on a central rod.

Its subcellular location is the periplasm. It localises to the bacterial flagellum basal body. Functionally, assembles around the rod to form the L-ring and probably protects the motor/basal body from shearing forces during rotation. The chain is Flagellar P-ring protein from Vibrio vulnificus (strain YJ016).